A 370-amino-acid chain; its full sequence is NSFL1 cofactor p47 (370 aa).

Positions 54–73 (SQATPSSVSRGTAPSDNRVT) are disordered. 4 positions are modified to phosphoserine: serine 74, serine 102, serine 114, and serine 140. 2 disordered regions span residues 80-116 (HDQD…KSPN) and 138-157 (TKSP…GYRL). Positions 109 to 115 (PPRKKSP) match the Nuclear localization signal motif. Tyrosine 167 is modified (phosphotyrosine). Positions 172–175 (RRRH) match the Nuclear localization signal motif. Residues serine 176, serine 192, and serine 272 each carry the phosphoserine modification. Positions 179 to 244 (DVHVVLKLWK…MEDHRDEDFV (66 aa)) constitute an SEP domain. The 78-residue stretch at 291–368 (EAEPTTNIQI…NLLNAVIVQR (78 aa)) folds into the UBX domain.

Belongs to the NSFL1C family. As to quaternary structure, part of a ternary complex containing STX5A, NSFL1C and VCP. NSFL1C forms a homotrimer that binds to one end of a VCP homohexamer. The complex binds to membranes enriched in phosphatidylethanolamine-containing lipids and promotes Golgi membrane fusion. Interaction with VCIP135 leads to dissociation of the complex via ATP hydrolysis by VCP. Binds ubiquitin and mono-ubiquitinated proteins via its N-terminal UBA-like domain when bound to VCP. Phosphorylated during mitosis. Phosphorylation inhibits interaction with Golgi membranes and is required for the fragmentation of the Golgi stacks during mitosis.

The protein localises to the nucleus. It localises to the golgi apparatus. The protein resides in the golgi stack. It is found in the chromosome. Its subcellular location is the cytoplasm. The protein localises to the cytoskeleton. It localises to the microtubule organizing center. The protein resides in the centrosome. Reduces the ATPase activity of VCP. Necessary for the fragmentation of Golgi stacks during mitosis and for VCP-mediated reassembly of Golgi stacks after mitosis. May play a role in VCP-mediated formation of transitional endoplasmic reticulum (tER). Inhibits the activity of CTSL (in vitro). Together with UBXN2B/p37, regulates the centrosomal levels of kinase AURKA/Aurora A during mitotic progression by promoting AURKA removal from centrosomes in prophase. Also, regulates spindle orientation during mitosis. In Mus musculus (Mouse), this protein is NSFL1 cofactor p47 (Nsfl1c).